Reading from the N-terminus, the 474-residue chain is Putative pectinesterase/pectinesterase inhibitor 38 (474 aa).

The tract at residues methionine 1–valine 130 is pectinesterase inhibitor 38. Asparagine 80 is a glycosylation site (N-linked (GlcNAc...) asparagine). The segment at aspartate 164–serine 461 is pectinesterase 38. Residues threonine 241 and glutamine 271 each coordinate substrate. The active-site Proton donor; for pectinesterase activity is aspartate 294. Cysteine 308 and cysteine 328 are joined by a disulfide. The Nucleophile; for pectinesterase activity role is filled by aspartate 315. Asparagine 351 is a glycosylation site (N-linked (GlcNAc...) asparagine). Residues arginine 380 and tryptophan 382 each coordinate substrate. Asparagine 409 carries an N-linked (GlcNAc...) asparagine glycan.

The protein in the N-terminal section; belongs to the PMEI family. In the C-terminal section; belongs to the pectinesterase family.

The protein resides in the secreted. It is found in the cell wall. The catalysed reaction is [(1-&gt;4)-alpha-D-galacturonosyl methyl ester](n) + n H2O = [(1-&gt;4)-alpha-D-galacturonosyl](n) + n methanol + n H(+). It functions in the pathway glycan metabolism; pectin degradation; 2-dehydro-3-deoxy-D-gluconate from pectin: step 1/5. Acts in the modification of cell walls via demethylesterification of cell wall pectin. The polypeptide is Putative pectinesterase/pectinesterase inhibitor 38 (PME38) (Arabidopsis thaliana (Mouse-ear cress)).